Consider the following 289-residue polypeptide: Serine/threonine-protein phosphatase PGAM5, mitochondrial (289 aa).

Topologically, residues 1–6 (MAFRQA) are mitochondrial matrix. A helical membrane pass occupies residues 7–29 (LQLAACGLAGGSAAVLFSAVAVG). Topologically, residues 30 to 289 (KPRAGGDAEP…FMPPDKITRS (260 aa)) are mitochondrial intermembrane. The disordered stretch occupies residues 32–59 (RAGGDAEPRPAEPPAWAGGARPGPGVWD). Residues 45–56 (PAWAGGARPGPG) are compositionally biased toward low complexity. The segment at 77–82 (NVESGE) is interaction with KEAP1. Phosphoserine occurs at positions 80 and 87. 3 positions are modified to N6-acetyllysine: Lys116, Lys144, and Lys191.

The protein belongs to the phosphoglycerate mutase family. BPG-dependent PGAM subfamily. As to quaternary structure, dimer. Forms a ternary complex with NFE2L2 and KEAP1. Interacts with BCL2L1 and MAP3K5. Upon TNF-induced necrosis, forms in complex with RIPK1, RIPK3 and MLKL; the formation of this complex leads to PGAM5 phosphorylation. Isoform 2, but not isoform 1, interacts with DNM1L; this interaction leads to DNM1L dephosphorylation and activation and eventually to mitochondria fragmentation. Both isoform 1 and isoform 2 are phosphorylated by the RIPK1/RIPK3 complex under necrotic conditions. This phosphorylation increases PGAM5 phosphatase activity. Post-translationally, proteolytically cleaved by PARL in response to loss of mitochondrial membrane potential.

The protein localises to the mitochondrion outer membrane. The protein resides in the mitochondrion inner membrane. It catalyses the reaction O-phospho-L-seryl-[protein] + H2O = L-seryl-[protein] + phosphate. The catalysed reaction is O-phospho-L-threonyl-[protein] + H2O = L-threonyl-[protein] + phosphate. Functionally, mitochondrial serine/threonine phosphatase that dephosphorylates various substrates and thus plays a role in different biological processes including cellular senescence or mitophagy. Modulates cellular senescence by regulating mitochondrial dynamics. Mechanistically, participates in mitochondrial fission through dephosphorylating DNM1L/DRP1. Additionally, dephosphorylates MFN2 in a stress-sensitive manner and consequently protects it from ubiquitination and degradation to promote mitochondrial network formation. Regulates mitophagy independent of PARKIN by interacting with and dephosphorylating FUNDC1, which interacts with LC3. Regulates anti-oxidative response by forming a tertiary complex with KEAP1 and NRF2. Regulates necroptosis by acting as a RIPK3 target and recruiting the RIPK1-RIPK3-MLKL necrosis 'attack' complex to mitochondria. This chain is Serine/threonine-protein phosphatase PGAM5, mitochondrial (PGAM5), found in Homo sapiens (Human).